The sequence spans 138 residues: Integration host factor subunit beta (138 aa).

Positions 81 to 98 are enriched in basic and acidic residues; the sequence is KAGKELRERVDRSLERQG. The tract at residues 81 to 138 is disordered; sequence KAGKELRERVDRSLERQGDSSSEGEPVSLTAVKAARQAGGHHAAGFPAEATPTLVMSR.

It belongs to the bacterial histone-like protein family. As to quaternary structure, heterodimer of an alpha and a beta chain.

In terms of biological role, this protein is one of the two subunits of integration host factor, a specific DNA-binding protein that functions in genetic recombination as well as in transcriptional and translational control. This is Integration host factor subunit beta from Ralstonia nicotianae (strain ATCC BAA-1114 / GMI1000) (Ralstonia solanacearum).